Here is an 86-residue protein sequence, read N- to C-terminus: Large ribosomal subunit protein bL27 (86 aa).

The protein belongs to the bacterial ribosomal protein bL27 family.

In Christiangramia forsetii (strain DSM 17595 / CGMCC 1.15422 / KT0803) (Gramella forsetii), this protein is Large ribosomal subunit protein bL27.